Here is a 722-residue protein sequence, read N- to C-terminus: Bifunctional UDP-N-acetylglucosamine 2-epimerase/N-acetylmannosamine kinase (722 aa).

UDP is bound by residues Arg-19, Ser-23, Arg-113, His-220, and Asn-253. CMP-N-acetyl-beta-neuraminate is bound by residues Lys-259, Glu-271, Lys-280, and His-281. Val-282, Ser-301, Ser-302, Glu-307, and Arg-321 together coordinate UDP. The tract at residues 406 to 722 is N-acetylmannosamine kinase; it reads TLSALAVDLG…VLDYTTRRIY (317 aa). Position 413 (Asp-413) interacts with Mg(2+). An N-acyl-D-mannosamine 6-phosphate is bound at residue Gly-416. Thr-417, Asn-418, and Arg-420 together coordinate ADP. The an N-acyl-D-mannosamine 6-phosphate site is built by Gly-476, Arg-477, Thr-489, Asn-516, Asp-517, and Gly-545. Residues Gly-476, Arg-477, Thr-489, Asn-516, and Asp-517 each contribute to the an N-acyl-D-mannosamine site. Asp-517 is an active-site residue. Glu-566 and His-569 together coordinate an N-acyl-D-mannosamine. Residue His-569 participates in an N-acyl-D-mannosamine 6-phosphate binding. Residues His-569, Cys-579, Cys-581, and Cys-586 each coordinate Zn(2+). Glu-588 serves as a coordination point for an N-acyl-D-mannosamine 6-phosphate. Position 588 (Glu-588) interacts with an N-acyl-D-mannosamine.

In the N-terminal section; belongs to the UDP-N-acetylglucosamine 2-epimerase family. The protein in the C-terminal section; belongs to the ROK (NagC/XylR) family. As to quaternary structure, homodimer. Homotetramer. Homohexamer. The hexameric form exhibits both enzyme activities, whereas the dimeric form only catalyzes the phosphorylation of N-acyl-D-mannosamine. Post-translationally, phosphorylated. Phosphorylation by PKC activates the UDP-N-acetylglucosamine 2-epimerase activity. Highest expression in liver and placenta. Also found in heart, brain, lung, kidney, skeletal muscle and pancreas. Isoform 1 is expressed in heart, brain, kidney, liver, placenta, lung, spleen, pancreas, skeletal muscle and colon. Isoform 2 is expressed mainly in placenta, but also in brain, kidney, liver, lung, pancreas and colon. Isoform 3 is expressed at low level in kidney, liver, placenta and colon.

It is found in the cytoplasm. Its subcellular location is the cytosol. It carries out the reaction UDP-N-acetyl-alpha-D-glucosamine + H2O = aldehydo-N-acetyl-D-mannosamine + UDP + H(+). The catalysed reaction is an N-acyl-D-mannosamine + ATP = an N-acyl-D-mannosamine 6-phosphate + ADP + H(+). The protein operates within amino-sugar metabolism; N-acetylneuraminate biosynthesis. Its activity is regulated as follows. The UDP-N-acetylglucosamine 2-epimerase activity, in contrast to the N-acetylmannosamine kinase activity, exhibits allosteric regulation by cytidine monophosphate-N-acetylneuraminic acid (CMP-Neu5Ac), the end product of neuraminic acid biosynthesis. Moreover, the activity is contingent upon the oligomeric state of the enzyme. The monomeric form is inactive, while the dimeric form selectively catalyzes the phosphorylation of N-acetylmannosamine. The hexameric form, on the other hand, demonstrates full proficiency in both enzyme activities. Furthermore, the UDP-N-acetylglucosamine 2-epimerase activity is increased by PKC-mediated phosphorylation. Its function is as follows. Bifunctional enzyme that possesses both UDP-N-acetylglucosamine 2-epimerase and N-acetylmannosamine kinase activities, and serves as the initiator of the biosynthetic pathway leading to the production of N-acetylneuraminic acid (NeuAc), a critical precursor in the synthesis of sialic acids. By catalyzing this pivotal and rate-limiting step in sialic acid biosynthesis, this enzyme assumes a pivotal role in governing the regulation of cell surface sialylation, playing a role in embryonic angiogenesis. Sialic acids represent a category of negatively charged sugars that reside on the surface of cells as terminal components of glycoconjugates and mediate important functions in various cellular processes, including cell adhesion, signal transduction, and cellular recognition. The chain is Bifunctional UDP-N-acetylglucosamine 2-epimerase/N-acetylmannosamine kinase from Homo sapiens (Human).